The chain runs to 1105 residues: DNA polymerase delta catalytic subunit (1105 aa).

The interval 1–46 is disordered; the sequence is MSSGGRGGKRRGAPPPGPSGAAAKRAHPGGTPQPPPPAATAAAPVA. Residues cysteine 1015, cysteine 1018, cysteine 1030, and cysteine 1033 each contribute to the Zn(2+) site. The CysA-type zinc-finger motif lies at 1015–1033; that stretch reads CLGCKAVISGSNQTLCFHC. [4Fe-4S] cluster is bound by residues cysteine 1062, cysteine 1065, cysteine 1075, and cysteine 1080. Positions 1062-1080 match the CysB motif motif; that stretch reads CQECQGSLHQDVLCTSRDC.

It belongs to the DNA polymerase type-B family. As to quaternary structure, heterodimer with subunits of 125 kDa and 50 kDa. The 125 kDa subunit contains the polymerase active site and most likely the active site for the 3'-5' exonuclease activity. It depends on [4Fe-4S] cluster as a cofactor.

The protein localises to the nucleus. The enzyme catalyses DNA(n) + a 2'-deoxyribonucleoside 5'-triphosphate = DNA(n+1) + diphosphate. Functionally, this polymerase possesses two enzymatic activities: DNA synthesis (polymerase) and an exonucleolytic activity that degrades single-stranded DNA in the 3'- to 5'-direction. The protein is DNA polymerase delta catalytic subunit (POLD1) of Oryza sativa subsp. japonica (Rice).